The following is a 286-amino-acid chain: Pyridoxal kinase PdxY (286 aa).

Residues Ser-9 and 44–45 (MQ) each bind substrate. ATP-binding residues include Asp-111, Glu-147, and Lys-180. Asp-221 is a substrate binding site.

The protein belongs to the pyridoxine kinase family. PdxY subfamily. In terms of assembly, homodimer. Requires Mg(2+) as cofactor.

It carries out the reaction pyridoxal + ATP = pyridoxal 5'-phosphate + ADP + H(+). It participates in cofactor metabolism; pyridoxal 5'-phosphate salvage; pyridoxal 5'-phosphate from pyridoxal: step 1/1. Functionally, pyridoxal kinase involved in the salvage pathway of pyridoxal 5'-phosphate (PLP). Catalyzes the phosphorylation of pyridoxal to PLP. This Burkholderia lata (strain ATCC 17760 / DSM 23089 / LMG 22485 / NCIMB 9086 / R18194 / 383) protein is Pyridoxal kinase PdxY.